Reading from the N-terminus, the 153-residue chain is Ribosomal RNA large subunit methyltransferase H (153 aa).

S-adenosyl-L-methionine is bound by residues L70, G102, and 121 to 126 (LSAMTF).

Belongs to the RNA methyltransferase RlmH family. Homodimer.

The protein localises to the cytoplasm. It carries out the reaction pseudouridine(1915) in 23S rRNA + S-adenosyl-L-methionine = N(3)-methylpseudouridine(1915) in 23S rRNA + S-adenosyl-L-homocysteine + H(+). In terms of biological role, specifically methylates the pseudouridine at position 1915 (m3Psi1915) in 23S rRNA. The sequence is that of Ribosomal RNA large subunit methyltransferase H from Trichlorobacter lovleyi (strain ATCC BAA-1151 / DSM 17278 / SZ) (Geobacter lovleyi).